The following is a 220-amino-acid chain: UPF0319 protein YccT (220 aa).

A signal peptide spans 1–20 (MKTGALTTFLALCLPVTVFA).

It belongs to the UPF0319 family.

This chain is UPF0319 protein YccT, found in Salmonella schwarzengrund (strain CVM19633).